Reading from the N-terminus, the 233-residue chain is tRNA (guanine-N(7)-)-methyltransferase (233 aa).

S-adenosyl-L-methionine contacts are provided by glutamate 62, glutamate 87, aspartate 114, and aspartate 136. Aspartate 136 is an active-site residue. Substrate contacts are provided by residues lysine 140, aspartate 172, and 211–214 (TRYE).

This sequence belongs to the class I-like SAM-binding methyltransferase superfamily. TrmB family.

It catalyses the reaction guanosine(46) in tRNA + S-adenosyl-L-methionine = N(7)-methylguanosine(46) in tRNA + S-adenosyl-L-homocysteine. The protein operates within tRNA modification; N(7)-methylguanine-tRNA biosynthesis. In terms of biological role, catalyzes the formation of N(7)-methylguanine at position 46 (m7G46) in tRNA. The chain is tRNA (guanine-N(7)-)-methyltransferase from Erythrobacter litoralis (strain HTCC2594).